We begin with the raw amino-acid sequence, 101 residues long: Interleukin-8 (101 aa).

The N-terminal stretch at 1–22 (MTSKLAVALLAAFLLSAALCEG) is a signal peptide. Arginine 27 is modified (citrulline). 2 disulfides stabilise this stretch: cysteine 34–cysteine 61 and cysteine 36–cysteine 77.

The protein belongs to the intercrine alpha (chemokine CxC) family. In terms of assembly, homodimer. Interacts with TNFAIP6 (via Link domain); this interaction interferes with chemokine binding to glycosaminoglycans. Citrullination at Arg-27 prevents proteolysis, and dampens tissue inflammation, it also enhances leukocytosis, possibly through impaired chemokine clearance from the blood circulation.

It is found in the secreted. Functionally, chemotactic factor that mediates inflammatory response by attracting neutrophils, basophils, and T-cells to clear pathogens and protect the host from infection. Also plays an important role in neutrophil activation. Released in response to an inflammatory stimulus, exerts its effect by binding to the G-protein-coupled receptors CXCR1 and CXCR2, primarily found in neutrophils, monocytes and endothelial cells. G-protein heterotrimer (alpha, beta, gamma subunits) constitutively binds to CXCR1/CXCR2 receptor and activation by IL8 leads to beta and gamma subunits release from Galpha (GNAI2 in neutrophils) and activation of several downstream signaling pathways including PI3K and MAPK pathways. The sequence is that of Interleukin-8 (CXCL8) from Cercocebus atys (Sooty mangabey).